The following is a 381-amino-acid chain: Queuine tRNA-ribosyltransferase (381 aa).

The Proton acceptor role is filled by Asp-92. Substrate is bound by residues 92–96 (DSGGF), Asp-146, Gln-190, and Gly-217. Residues 248–254 (GVGRPED) are RNA binding. Asp-267 serves as the catalytic Nucleophile. The RNA binding; important for wobble base 34 recognition stretch occupies residues 272 to 276 (TRNAR). 4 residues coordinate Zn(2+): Cys-305, Cys-307, Cys-310, and His-337.

This sequence belongs to the queuine tRNA-ribosyltransferase family. Homodimer. Within each dimer, one monomer is responsible for RNA recognition and catalysis, while the other monomer binds to the replacement base PreQ1. Requires Zn(2+) as cofactor.

The enzyme catalyses 7-aminomethyl-7-carbaguanine + guanosine(34) in tRNA = 7-aminomethyl-7-carbaguanosine(34) in tRNA + guanine. The protein operates within tRNA modification; tRNA-queuosine biosynthesis. Its function is as follows. Catalyzes the base-exchange of a guanine (G) residue with the queuine precursor 7-aminomethyl-7-deazaguanine (PreQ1) at position 34 (anticodon wobble position) in tRNAs with GU(N) anticodons (tRNA-Asp, -Asn, -His and -Tyr). Catalysis occurs through a double-displacement mechanism. The nucleophile active site attacks the C1' of nucleotide 34 to detach the guanine base from the RNA, forming a covalent enzyme-RNA intermediate. The proton acceptor active site deprotonates the incoming PreQ1, allowing a nucleophilic attack on the C1' of the ribose to form the product. After dissociation, two additional enzymatic reactions on the tRNA convert PreQ1 to queuine (Q), resulting in the hypermodified nucleoside queuosine (7-(((4,5-cis-dihydroxy-2-cyclopenten-1-yl)amino)methyl)-7-deazaguanosine). The chain is Queuine tRNA-ribosyltransferase from Xanthomonas oryzae pv. oryzae (strain MAFF 311018).